The chain runs to 1612 residues: DNA topoisomerase 2-beta (1612 aa).

N-acetylalanine is present on A2. At K3 the chain carries N6-acetyllysine. Glycyl lysine isopeptide (Lys-Gly) (interchain with G-Cter in SUMO2) cross-links involve residues K21 and K22. Residues N100, N129, and 157–159 (SSN) contribute to the ATP site. Glycyl lysine isopeptide (Lys-Gly) (interchain with G-Cter in SUMO2) cross-links involve residues K165 and K166. An ATP-binding site is contributed by 170-177 (GRNGYGAK). Glycyl lysine isopeptide (Lys-Gly) (interchain with G-Cter in SUMO2) cross-links involve residues K216 and K287. The segment at 351–353 (KKK) is interaction with DNA. Glycyl lysine isopeptide (Lys-Gly) (interchain with G-Cter in SUMO2) cross-links involve residues K355 and K361. 385 to 387 (QTK) is a binding site for ATP. Residues K425, K427, and K434 each participate in a glycyl lysine isopeptide (Lys-Gly) (interchain with G-Cter in SUMO2) cross-link. Residues 464-581 (CTLILTEGDS…SLLKHGFLEE (118 aa)) enclose the Toprim domain. E470, D550, and D552 together coordinate Mg(2+). Glycyl lysine isopeptide (Lys-Gly) (interchain with G-Cter in SUMO2) cross-links involve residues K588, K593, K623, K631, K634, K664, and K700. Positions 724 to 1177 (IPSLVDGFKP…SPSDLWKEDL (454 aa)) constitute a Topo IIA-type catalytic domain. Residue Y814 is the O-(5'-phospho-DNA)-tyrosine intermediate of the active site. The tract at residues 999 to 1008 (KLQTTLTCNS) is interaction with DNA. A Glycyl lysine isopeptide (Lys-Gly) (interchain with G-Cter in SUMO2) cross-link involves residue K1080. The interval 1098-1128 (AWKEAQEKAAEEEDTQNQHDDSSSDSGTPSG) is disordered. Glycyl lysine isopeptide (Lys-Gly) (interchain with G-Cter in SUMO2) cross-links involve residues K1202, K1205, K1214, and K1215. Phosphoserine is present on S1224. Glycyl lysine isopeptide (Lys-Gly) (interchain with G-Cter in SUMO2) cross-links involve residues K1238, K1250, and K1259. Residues 1245–1586 (LLKKKKGDPD…FTSEPPALPR (342 aa)) form a disordered region. T1280 carries the phosphothreonine modification. Residues K1311 and K1315 each participate in a glycyl lysine isopeptide (Lys-Gly) (interchain with G-Cter in SUMO2) cross-link. Basic and acidic residues-rich tracts occupy residues 1322–1332 (PWSDDESKSES) and 1346–1358 (SLLRRAAAERPKY). Phosphoserine is present on residues S1324, S1328, S1330, S1332, and S1346. Y1358 carries the phosphotyrosine modification. A compositionally biased stretch (acidic residues) spans 1362 to 1379 (FSEEEEEDADDDDDNNDL). S1363 bears the Phosphoserine mark. K1385 participates in a covalent cross-link: Glycyl lysine isopeptide (Lys-Gly) (interchain with G-Cter in SUMO2). The residue at position 1387 (S1387) is a Phosphoserine. T1390 is modified (phosphothreonine). The residue at position 1400 (S1400) is a Phosphoserine. Y1408 is modified (phosphotyrosine). S1411 is modified (phosphoserine). Residues 1417–1429 (ATPEKSSHDKKSQ) show a composition bias toward basic and acidic residues. A Glycyl lysine isopeptide (Lys-Gly) (interchain with G-Cter in SUMO2) cross-link involves residue K1427. Phosphoserine is present on residues S1428, S1439, and S1441. K1443 participates in a covalent cross-link: Glycyl lysine isopeptide (Lys-Gly) (interchain with G-Cter in SUMO2). Residues 1443-1453 (KSEDDSAKFDS) show a composition bias toward basic and acidic residues. S1448, S1453, and S1460 each carry phosphoserine. K1477 is covalently cross-linked (Glycyl lysine isopeptide (Lys-Gly) (interchain with G-Cter in SUMO2)). Positions 1493-1499 (KAKRAPK) are interaction with PLSCR1. Phosphoserine occurs at positions 1509, 1511, and 1513. Positions 1526–1536 (GKGRGAKKRKA) are enriched in basic residues. S1537 and S1539 each carry phosphoserine. Basic residues predominate over residues 1550 to 1561 (KPSKTASKKPKK). T1562 bears the Phosphothreonine mark. A phosphoserine mark is found at S1563 and S1568. Position 1596 is a phosphotyrosine (Y1596). S1600 carries the phosphoserine modification.

It belongs to the type II topoisomerase family. Homodimer. Interacts with PLSCR1 and KIAA1210. It depends on Mg(2+) as a cofactor. Requires Mn(2+) as cofactor. The cofactor is Ca(2+).

The protein localises to the nucleus. The protein resides in the nucleolus. Its subcellular location is the nucleoplasm. It carries out the reaction ATP-dependent breakage, passage and rejoining of double-stranded DNA.. In terms of biological role, key decatenating enzyme that alters DNA topology by binding to two double-stranded DNA molecules, generating a double-stranded break in one of the strands, passing the intact strand through the broken strand, and religating the broken strand. The sequence is that of DNA topoisomerase 2-beta (TOP2B) from Cricetulus longicaudatus (Long-tailed dwarf hamster).